The primary structure comprises 245 residues: 3-deoxy-manno-octulosonate cytidylyltransferase (245 aa).

Belongs to the KdsB family.

The protein localises to the cytoplasm. The enzyme catalyses 3-deoxy-alpha-D-manno-oct-2-ulosonate + CTP = CMP-3-deoxy-beta-D-manno-octulosonate + diphosphate. The protein operates within nucleotide-sugar biosynthesis; CMP-3-deoxy-D-manno-octulosonate biosynthesis; CMP-3-deoxy-D-manno-octulosonate from 3-deoxy-D-manno-octulosonate and CTP: step 1/1. Its pathway is bacterial outer membrane biogenesis; lipopolysaccharide biosynthesis. Functionally, activates KDO (a required 8-carbon sugar) for incorporation into bacterial lipopolysaccharide in Gram-negative bacteria. The sequence is that of 3-deoxy-manno-octulosonate cytidylyltransferase from Desulfatibacillum aliphaticivorans.